The following is a 141-amino-acid chain: Antifungal protein ginkbilobin-like protein 1 (141 aa).

Residues 1 to 32 (MSISSKFQLRSSTSLLLLVALMVVMGMDGAAA) form the signal peptide. One can recognise a Gnk2-homologous domain in the interval 36-141 (TNFVSSACNT…CFIQYEQHSF (106 aa)). 3 cysteine pairs are disulfide-bonded: Cys-43/Cys-119, Cys-95/Cys-104, and Cys-107/Cys-132. Asn-44 serves as a coordination point for alpha-D-mannopyranose. Alpha-D-mannopyranose is bound by residues Arg-126 and Glu-137.

Functionally, exerts antifungal activity through its carbohydrate-binding specificity. This chain is Antifungal protein ginkbilobin-like protein 1, found in Picea glauca (White spruce).